A 589-amino-acid chain; its full sequence is MTQTKGIVSAVNGNMVSVTFEGVVSLNEVGYVHVGNARLKAEIIRVRGREAQLQVFEITRGVSVGDRVEFTGDLLSVELGPGLLGQVYDGLQNPLPLLAEKVGYFLERGVYLPALSRTSEWMFTPHVSVGERVVRGDVLGYTPEGALKHRIMVPFHMGDSYEVVFIQTAGTYRVHDVIARVRDAQGHEHELTMAFRWPVKRPVHCYAERLKPTEPLVTSIRTIDTFFPVAKGGTYCIPGPFGAGKTVLQHSTSRNADVDVVVIAACGERAGEVVETLREFPDLTDPRTGRSLMERTVIVCNTSSMPVASREASVYTGVTLAEYYRQMGLDVLLLADSTSRWAQALREMSGRLEEIPGEEAFPAYLESCIAAFYERAGVVRLRSGEKGSVTIGGTVSPAGGNFEEPVTQATLKVVGAFHGLSRERSDARRYPAVHPLDSWSKYPSVLDARAVAYGRSFLRRGAEVEQMMRVVGEEGTSMEDFLVYLKGSFLDSVYLQQNSFDTVDSAVPVARQKHCYAIVMRVLGSVLAFESKDDARAYFSKLGHMFIDYNCCAWNSEAFVEKEKEIRAFLQGESTKIDSEAEGIIRGME.

239-246 (GPFGAGKT) provides a ligand contact to ATP.

This sequence belongs to the ATPase alpha/beta chains family.

The catalysed reaction is ATP + H2O + 4 H(+)(in) = ADP + phosphate + 5 H(+)(out). Its function is as follows. Produces ATP from ADP in the presence of a proton gradient across the membrane. The V-type alpha chain is a catalytic subunit. The sequence is that of V-type ATP synthase alpha chain 1 (atpA1) from Treponema pallidum (strain Nichols).